Here is a 399-residue protein sequence, read N- to C-terminus: Elongation factor Tu (399 aa).

One can recognise a tr-type G domain in the interval 10–209; that stretch reads NPHVNIGTIG…EVDSYIPTPE (200 aa). The G1 stretch occupies residues 19–26; the sequence is GHVYHGKT. A GTP-binding site is contributed by 19–26; the sequence is GHVYHGKT. Residue threonine 26 coordinates Mg(2+). Residues 60 to 64 form a G2 region; it reads GITIA. A G3 region spans residues 81–84; that stretch reads DCPG. Residues 81–85 and 136–139 each bind GTP; these read DCPGH and NKQD. Residues 136–139 form a G4 region; it reads NKQD. The segment at 174–176 is G5; sequence SAL.

It belongs to the TRAFAC class translation factor GTPase superfamily. Classic translation factor GTPase family. EF-Tu/EF-1A subfamily. Monomer.

Its subcellular location is the cytoplasm. The enzyme catalyses GTP + H2O = GDP + phosphate + H(+). In terms of biological role, GTP hydrolase that promotes the GTP-dependent binding of aminoacyl-tRNA to the A-site of ribosomes during protein biosynthesis. In Helicobacter pylori (strain J99 / ATCC 700824) (Campylobacter pylori J99), this protein is Elongation factor Tu.